Here is a 246-residue protein sequence, read N- to C-terminus: Fasciclin-like arabinogalactan protein 11 (246 aa).

An N-terminal signal peptide occupies residues 1–24 (MATSRTFIFSNLFIFFLVIATTYG). In terms of domain architecture, FAS1 spans 34–179 (PTNITAILEK…LAVYQVDQVL (146 aa)). N-linked (GlcNAc...) asparagine glycans are attached at residues asparagine 36, asparagine 68, asparagine 141, and asparagine 150. Positions 193 to 222 (PAPEKGGSVSKGSASGGDDGGDSTDSSDAE) are disordered. Residue serine 219 is the site of GPI-anchor amidated serine attachment. A propeptide spans 220–246 (DAERTGFGFGIRITTVAAIAASSSLWI) (removed in mature form).

This sequence belongs to the fasciclin-like AGP family. Expressed in the sclerenchyma cells of inflorescence stems and siliques.

The protein localises to the cell membrane. Its function is as follows. May be a cell surface adhesion protein. In Arabidopsis thaliana (Mouse-ear cress), this protein is Fasciclin-like arabinogalactan protein 11 (FLA11).